The following is a 172-amino-acid chain: 3-hydroxydecanoyl-[acyl-carrier-protein] dehydratase (172 aa).

Residue H71 is part of the active site.

This sequence belongs to the thioester dehydratase family. FabA subfamily. Homodimer.

It localises to the cytoplasm. The enzyme catalyses a (3R)-hydroxyacyl-[ACP] = a (2E)-enoyl-[ACP] + H2O. The catalysed reaction is (3R)-hydroxydecanoyl-[ACP] = (2E)-decenoyl-[ACP] + H2O. It catalyses the reaction (2E)-decenoyl-[ACP] = (3Z)-decenoyl-[ACP]. It participates in lipid metabolism; fatty acid biosynthesis. Functionally, necessary for the introduction of cis unsaturation into fatty acids. Catalyzes the dehydration of (3R)-3-hydroxydecanoyl-ACP to E-(2)-decenoyl-ACP and then its isomerization to Z-(3)-decenoyl-ACP. Can catalyze the dehydratase reaction for beta-hydroxyacyl-ACPs with saturated chain lengths up to 16:0, being most active on intermediate chain length. The polypeptide is 3-hydroxydecanoyl-[acyl-carrier-protein] dehydratase (Blochmanniella floridana).